The sequence spans 234 residues: Ponticulin-like protein J (234 aa).

The first 20 residues, 1–20 (MRLLNNLILMVVLFVAVSNA), serve as a signal peptide directing secretion. Residues asparagine 19, asparagine 143, asparagine 166, and asparagine 206 are each glycosylated (N-linked (GlcNAc...) asparagine). Positions 115–213 (TIKCGTLPPD…SDNETAEGNN (99 aa)) are disordered. Residues 154–195 (KSTPKSPSTPKTNNSNEDSDLTTSSSDSSSSTKSSPKSKSST) show a composition bias toward low complexity. Asparagine 212 carries the GPI-like-anchor amidated asparagine lipid modification. N-linked (GlcNAc...) asparagine glycosylation is present at asparagine 213. The propeptide at 213-234 (NASSNIATFSLVIISLLVASLF) is removed in mature form.

This sequence belongs to the ponticulin family. The GPI-like-anchor contains a phosphoceramide group, rather than a phosphatidyl group.

It is found in the cell membrane. In terms of biological role, binds F-actin and nucleates actin assembly. This is Ponticulin-like protein J (ponJ) from Dictyostelium discoideum (Social amoeba).